The chain runs to 371 residues: tRNA/tmRNA (uracil-C(5))-methyltransferase (371 aa).

S-adenosyl-L-methionine-binding residues include glutamine 194, tyrosine 223, asparagine 228, glutamate 244, and aspartate 304. Cysteine 329 acts as the Nucleophile in catalysis. The active-site Proton acceptor is glutamate 363.

The protein belongs to the class I-like SAM-binding methyltransferase superfamily. RNA M5U methyltransferase family. TrmA subfamily.

The catalysed reaction is uridine(54) in tRNA + S-adenosyl-L-methionine = 5-methyluridine(54) in tRNA + S-adenosyl-L-homocysteine + H(+). It catalyses the reaction uridine(341) in tmRNA + S-adenosyl-L-methionine = 5-methyluridine(341) in tmRNA + S-adenosyl-L-homocysteine + H(+). Functionally, dual-specificity methyltransferase that catalyzes the formation of 5-methyluridine at position 54 (m5U54) in all tRNAs, and that of position 341 (m5U341) in tmRNA (transfer-mRNA). This Sulfurovum sp. (strain NBC37-1) protein is tRNA/tmRNA (uracil-C(5))-methyltransferase.